The primary structure comprises 207 residues: Hepatic lectin (207 aa).

The residue at position 1 (M1) is an N-acetylmethionine. Residues 1-23 (MDEERLSDNVRLYKGGSIRQGLR) lie on the Cytoplasmic side of the membrane. The helical; Signal-anchor for type II membrane protein transmembrane segment at 24–48 (SFAAVYVLLALSFLLLTLLSSVSLA) threads the bilayer. The Extracellular portion of the chain corresponds to 49–207 (RIAALSSKLS…YYVCEKPLPK (159 aa)). The N-linked (GlcNAc...) asparagine glycan is linked to N67. The C-type lectin domain occupies 77-203 (PCGAQSRQWE…TYECYYVCEK (127 aa)). 3 cysteine pairs are disulfide-bonded: C78/C92, C109/C201, and C179/C193.

Post-translationally, some or all of the cysteines are involved in disulfide bonds.

The protein localises to the membrane. Functionally, hepatic lectin is a membrane receptor protein that recognizes and binds exposed N-acetylglucosamine moieties of plasma glycoproteins, thus mediating their clearance (from the circulation) and endocytosis. In Gallus gallus (Chicken), this protein is Hepatic lectin.